The following is a 254-amino-acid chain: Ribonuclease HII (254 aa).

The RNase H type-2 domain maps to 46 to 234; it reads KLIAGIDEVG…VWMASAPQEV (189 aa). Aspartate 52, glutamate 53, and aspartate 144 together coordinate a divalent metal cation.

It belongs to the RNase HII family. The cofactor is Mn(2+). Mg(2+) is required as a cofactor.

Its subcellular location is the cytoplasm. It catalyses the reaction Endonucleolytic cleavage to 5'-phosphomonoester.. Its function is as follows. Endonuclease that specifically degrades the RNA of RNA-DNA hybrids. In Koribacter versatilis (strain Ellin345), this protein is Ribonuclease HII.